Consider the following 201-residue polypeptide: MNISGLIIGLGNPGREYDRTRHNFGFMFIDALLEEAQRNPFARCEQLSGGKKKYDLWRCDIVEGQAPWLLAKPQTFMNLSGEAVLAIASFYRVKPAAMVVAHDELDLPLGRMRFKMGGGNAGHNGLKSITQCLGTPDFHRLRLGIGKPPAGGETTGWVLGRFSQSDTAMVDAVLEAAIQGIRTFATEGDVAATQYINAFRP.

Y17 is a binding site for tRNA. H22 (proton acceptor) is an active-site residue. TRNA-binding residues include F76, N78, and N124.

This sequence belongs to the PTH family. Monomer.

It localises to the cytoplasm. The catalysed reaction is an N-acyl-L-alpha-aminoacyl-tRNA + H2O = an N-acyl-L-amino acid + a tRNA + H(+). Its function is as follows. Hydrolyzes ribosome-free peptidyl-tRNAs (with 1 or more amino acids incorporated), which drop off the ribosome during protein synthesis, or as a result of ribosome stalling. Catalyzes the release of premature peptidyl moieties from peptidyl-tRNA molecules trapped in stalled 50S ribosomal subunits, and thus maintains levels of free tRNAs and 50S ribosomes. The polypeptide is Peptidyl-tRNA hydrolase (Nitratidesulfovibrio vulgaris (strain ATCC 29579 / DSM 644 / CCUG 34227 / NCIMB 8303 / VKM B-1760 / Hildenborough) (Desulfovibrio vulgaris)).